The primary structure comprises 406 residues: Bifunctional enzyme IspD/IspF (406 aa).

Residues 1–246 (MLQMPSKQPI…KLSASLLPDV (246 aa)) are 2-C-methyl-D-erythritol 4-phosphate cytidylyltransferase. The tract at residues 247-406 (RTGNGYDVHQ…ATVVYRGVKR (160 aa)) is 2-C-methyl-D-erythritol 2,4-cyclodiphosphate synthase. A divalent metal cation contacts are provided by aspartate 253 and histidine 255. 4-CDP-2-C-methyl-D-erythritol 2-phosphate contacts are provided by residues 253-255 (DVH) and 279-280 (HS). Residue histidine 287 coordinates a divalent metal cation. 4-CDP-2-C-methyl-D-erythritol 2-phosphate-binding positions include 301–303 (DIG), 377–380 (TTNE), phenylalanine 384, and arginine 387.

In the N-terminal section; belongs to the IspD/TarI cytidylyltransferase family. IspD subfamily. It in the C-terminal section; belongs to the IspF family. The cofactor is a divalent metal cation.

The enzyme catalyses 2-C-methyl-D-erythritol 4-phosphate + CTP + H(+) = 4-CDP-2-C-methyl-D-erythritol + diphosphate. The catalysed reaction is 4-CDP-2-C-methyl-D-erythritol 2-phosphate = 2-C-methyl-D-erythritol 2,4-cyclic diphosphate + CMP. Its pathway is isoprenoid biosynthesis; isopentenyl diphosphate biosynthesis via DXP pathway; isopentenyl diphosphate from 1-deoxy-D-xylulose 5-phosphate: step 2/6. It participates in isoprenoid biosynthesis; isopentenyl diphosphate biosynthesis via DXP pathway; isopentenyl diphosphate from 1-deoxy-D-xylulose 5-phosphate: step 4/6. Bifunctional enzyme that catalyzes the formation of 4-diphosphocytidyl-2-C-methyl-D-erythritol from CTP and 2-C-methyl-D-erythritol 4-phosphate (MEP) (IspD), and catalyzes the conversion of 4-diphosphocytidyl-2-C-methyl-D-erythritol 2-phosphate (CDP-ME2P) to 2-C-methyl-D-erythritol 2,4-cyclodiphosphate (ME-CPP) with a corresponding release of cytidine 5-monophosphate (CMP) (IspF). This chain is Bifunctional enzyme IspD/IspF, found in Rhizobium leguminosarum bv. trifolii (strain WSM2304).